A 512-amino-acid polypeptide reads, in one-letter code: 2,3-bisphosphoglycerate-independent phosphoglycerate mutase (512 aa).

Mn(2+) contacts are provided by Asp11 and Ser61. Ser61 acts as the Phosphoserine intermediate in catalysis. Residues His122, 152–153, Arg184, Arg190, 259–262, and Lys332 each bind substrate; these read RD and RADR. Asp399, His403, Asp440, His441, and His459 together coordinate Mn(2+).

This sequence belongs to the BPG-independent phosphoglycerate mutase family. Monomer. The cofactor is Mn(2+).

The enzyme catalyses (2R)-2-phosphoglycerate = (2R)-3-phosphoglycerate. Its pathway is carbohydrate degradation; glycolysis; pyruvate from D-glyceraldehyde 3-phosphate: step 3/5. Catalyzes the interconversion of 2-phosphoglycerate and 3-phosphoglycerate. This is 2,3-bisphosphoglycerate-independent phosphoglycerate mutase from Francisella tularensis subsp. tularensis (strain WY96-3418).